A 435-amino-acid chain; its full sequence is Polyadenylate-binding protein RBP47B (435 aa).

The segment covering 1–15 (MQTTNGSDSTLATSG) has biased composition (polar residues). Disordered stretches follow at residues 1–41 (MQTT…QQWM) and 85–104 (YGSY…RGSG). Residues 29–41 (QWQQQQQQQQQWM) are compositionally biased toward low complexity. 3 consecutive RRM domains span residues 108 to 188 (KTLW…WASF), 202 to 281 (LSVF…IATP), and 321 to 393 (ATIF…WGRS). Positions 392-412 (RSPNKQWRGDSGQQWNGGYSR) are disordered.

Belongs to the polyadenylate-binding RBP47 family. As to quaternary structure, interacts with the poly(A) tail of mRNA in nucleus. In terms of tissue distribution, expressed at low levels in leaves, stems, flowers, and seedlings.

Its subcellular location is the nucleus. It is found in the cytoplasmic granule. Its function is as follows. Heterogeneous nuclear ribonucleoprotein (hnRNP)-protein binding the poly(A) tail of mRNA and probably involved in some steps of pre-mRNA maturation. In Arabidopsis thaliana (Mouse-ear cress), this protein is Polyadenylate-binding protein RBP47B (RBP47B).